Reading from the N-terminus, the 260-residue chain is Acetylglutamate kinase (260 aa).

Substrate contacts are provided by residues 46–47 (GG), Arg-68, and Asn-160.

Belongs to the acetylglutamate kinase family. ArgB subfamily.

The protein resides in the cytoplasm. The catalysed reaction is N-acetyl-L-glutamate + ATP = N-acetyl-L-glutamyl 5-phosphate + ADP. It functions in the pathway amino-acid biosynthesis; L-arginine biosynthesis; N(2)-acetyl-L-ornithine from L-glutamate: step 2/4. Catalyzes the ATP-dependent phosphorylation of N-acetyl-L-glutamate. The sequence is that of Acetylglutamate kinase from Shewanella baltica (strain OS223).